The chain runs to 62 residues: Photosystem II reaction center protein Z (62 aa).

Transmembrane regions (helical) follow at residues 8–28 (AVFA…VVFA) and 41–61 (FSGT…NSLI).

It belongs to the PsbZ family. PSII is composed of 1 copy each of membrane proteins PsbA, PsbB, PsbC, PsbD, PsbE, PsbF, PsbH, PsbI, PsbJ, PsbK, PsbL, PsbM, PsbT, PsbY, PsbZ, Psb30/Ycf12, at least 3 peripheral proteins of the oxygen-evolving complex and a large number of cofactors. It forms dimeric complexes.

It localises to the plastid. The protein resides in the chloroplast thylakoid membrane. Its function is as follows. May control the interaction of photosystem II (PSII) cores with the light-harvesting antenna, regulates electron flow through the 2 photosystem reaction centers. PSII is a light-driven water plastoquinone oxidoreductase, using light energy to abstract electrons from H(2)O, generating a proton gradient subsequently used for ATP formation. This Morus indica (Mulberry) protein is Photosystem II reaction center protein Z.